Here is a 425-residue protein sequence, read N- to C-terminus: UDP-N-acetylglucosamine 1-carboxyvinyltransferase (425 aa).

A phosphoenolpyruvate-binding site is contributed by 25–26 (KN). R95 serves as a coordination point for UDP-N-acetyl-alpha-D-glucosamine. C119 functions as the Proton donor in the catalytic mechanism. 2-(S-cysteinyl)pyruvic acid O-phosphothioketal is present on C119. UDP-N-acetyl-alpha-D-glucosamine-binding positions include 124–128 (RPVDQ), D306, and I328.

The protein belongs to the EPSP synthase family. MurA subfamily.

The protein localises to the cytoplasm. The catalysed reaction is phosphoenolpyruvate + UDP-N-acetyl-alpha-D-glucosamine = UDP-N-acetyl-3-O-(1-carboxyvinyl)-alpha-D-glucosamine + phosphate. The protein operates within cell wall biogenesis; peptidoglycan biosynthesis. Its function is as follows. Cell wall formation. Adds enolpyruvyl to UDP-N-acetylglucosamine. The protein is UDP-N-acetylglucosamine 1-carboxyvinyltransferase of Thermus thermophilus (strain ATCC 27634 / DSM 579 / HB8).